Consider the following 583-residue polypeptide: ATP-dependent lipid A-core flippase (583 aa).

5 consecutive transmembrane segments (helical) span residues 27-47 (LAVAVVALIINAVSDTYMVSL), 69-89 (LLVFGLMFIRGISSFVSTYCL), 142-162 (ALVSIVREGTSIIGLLVLMFY), 165-185 (WQLSLVLILVAPVVAWAIGFV), and 249-269 (AAANPIIQMIASIAIVVVLYL). In terms of domain architecture, ABC transmembrane type-1 spans 28–310 (AVAVVALIIN…LTNVTSQFQR (283 aa)). The ABC transporter domain maps to 342-578 (VNVKDISFTY…DGAYAQLHRI (237 aa)). 376-383 (GRSGSGKS) is an ATP binding site.

It belongs to the ABC transporter superfamily. Lipid exporter (TC 3.A.1.106) family. As to quaternary structure, homodimer.

It localises to the cell inner membrane. The catalysed reaction is ATP + H2O + lipid A-core oligosaccharideSide 1 = ADP + phosphate + lipid A-core oligosaccharideSide 2.. Involved in lipopolysaccharide (LPS) biosynthesis. Translocates lipid A-core from the inner to the outer leaflet of the inner membrane. Transmembrane domains (TMD) form a pore in the inner membrane and the ATP-binding domain (NBD) is responsible for energy generation. This Vibrio vulnificus (strain CMCP6) protein is ATP-dependent lipid A-core flippase.